The chain runs to 277 residues: Shikimate dehydrogenase (NADP(+)) (277 aa).

Shikimate-binding positions include 15–17 (SLS) and T62. Residue K66 is the Proton acceptor of the active site. Residues N87 and D102 each coordinate shikimate. Residues 127–131 (GAGGA), 151–156 (NRTVDK), and I219 each bind NADP(+). Y221 contributes to the shikimate binding site. An NADP(+)-binding site is contributed by G242.

The protein belongs to the shikimate dehydrogenase family. Homodimer.

It carries out the reaction shikimate + NADP(+) = 3-dehydroshikimate + NADPH + H(+). Its pathway is metabolic intermediate biosynthesis; chorismate biosynthesis; chorismate from D-erythrose 4-phosphate and phosphoenolpyruvate: step 4/7. Involved in the biosynthesis of the chorismate, which leads to the biosynthesis of aromatic amino acids. Catalyzes the reversible NADPH linked reduction of 3-dehydroshikimate (DHSA) to yield shikimate (SA). This Bacillus cereus (strain G9842) protein is Shikimate dehydrogenase (NADP(+)).